We begin with the raw amino-acid sequence, 430 residues long: Tol-Pal system protein TolB (430 aa).

The signal sequence occupies residues 1 to 21; it reads MKQAFRLMVGLLVLWASVLHA.

Belongs to the TolB family. In terms of assembly, the Tol-Pal system is composed of five core proteins: the inner membrane proteins TolA, TolQ and TolR, the periplasmic protein TolB and the outer membrane protein Pal. They form a network linking the inner and outer membranes and the peptidoglycan layer.

It is found in the periplasm. Functionally, part of the Tol-Pal system, which plays a role in outer membrane invagination during cell division and is important for maintaining outer membrane integrity. TolB occupies a key intermediary position in the Tol-Pal system because it communicates directly with both membrane-embedded components, Pal in the outer membrane and TolA in the inner membrane. This Edwardsiella ictaluri (strain 93-146) protein is Tol-Pal system protein TolB.